Reading from the N-terminus, the 211-residue chain is Probable endo-1,4-beta-xylanase 5 (211 aa).

Positions 1–16 (MKVTAAFASLLLTAFA) are cleaved as a signal peptide. Residues 19–210 (APEPVLVSRS…GAGSASVTIS (192 aa)) enclose the GH11 domain. The active-site Nucleophile is the E106. The Proton donor role is filled by E197.

This sequence belongs to the glycosyl hydrolase 11 (cellulase G) family.

The protein resides in the secreted. The enzyme catalyses Endohydrolysis of (1-&gt;4)-beta-D-xylosidic linkages in xylans.. It participates in glycan degradation; xylan degradation. Endo-1,4-beta-xylanase involved in the hydrolysis of xylan, a major structural heterogeneous polysaccharide found in plant biomass representing the second most abundant polysaccharide in the biosphere, after cellulose. This is Probable endo-1,4-beta-xylanase 5 (XYN5) from Aspergillus niger (strain ATCC MYA-4892 / CBS 513.88 / FGSC A1513).